The primary structure comprises 265 residues: Apolipoprotein A-I (265 aa).

The N-terminal stretch at methionine 1–alanine 18 is a signal peptide. 2 tandem repeats follow at residues leucine 68–glycine 89 and proline 90–asparagine 111. The tract at residues leucine 68–glutamine 265 is 10 X approximate tandem repeats. Methionine 110 carries the methionine sulfoxide modification. A 3; half-length repeat occupies lysine 112–glutamine 122. Tandem repeats lie at residues proline 123–glutamate 144, proline 145–alanine 166, and proline 167–alanine 188. A 7; truncated repeat occupies proline 189 to serine 208. Methionine 194 carries the post-translational modification Methionine sulfoxide. Repeat unit 8 spans residues proline 209–glutamine 230. The stretch at proline 231–leucine 241 is one 9; half-length repeat. Repeat 10 spans residues proline 242–glutamine 265.

Belongs to the apolipoprotein A1/A4/E family. As to quaternary structure, homodimer. Interacts with APOA1BP and CLU. Component of a sperm activating protein complex (SPAP), consisting of APOA1, an immunoglobulin heavy chain, an immunoglobulin light chain and albumin. Interacts with NDRG1. Interacts with SCGB3A2. Interacts with NAXE and YJEFN3. In terms of processing, glycosylated. Post-translationally, palmitoylated. Phosphorylation sites are present in the extracellular medium.

The protein resides in the secreted. Participates in the reverse transport of cholesterol from tissues to the liver for excretion by promoting cholesterol efflux from tissues and by acting as a cofactor for the lecithin cholesterol acyltransferase (LCAT). As part of the SPAP complex, activates spermatozoa motility. The protein is Apolipoprotein A-I (Apoa1) of Dipodomys ordii (Ord's kangaroo rat).